We begin with the raw amino-acid sequence, 363 residues long: Lipoyl synthase (363 aa).

Residues cysteine 55, cysteine 60, cysteine 66, cysteine 81, cysteine 85, cysteine 88, and serine 292 each coordinate [4Fe-4S] cluster. One can recognise a Radical SAM core domain in the interval tryptophan 67–glycine 281. Positions proline 338–arginine 363 are disordered. The span at proline 352–arginine 363 shows a compositional bias: polar residues.

It belongs to the radical SAM superfamily. Lipoyl synthase family. The cofactor is [4Fe-4S] cluster.

The protein resides in the cytoplasm. The catalysed reaction is [[Fe-S] cluster scaffold protein carrying a second [4Fe-4S](2+) cluster] + N(6)-octanoyl-L-lysyl-[protein] + 2 oxidized [2Fe-2S]-[ferredoxin] + 2 S-adenosyl-L-methionine + 4 H(+) = [[Fe-S] cluster scaffold protein] + N(6)-[(R)-dihydrolipoyl]-L-lysyl-[protein] + 4 Fe(3+) + 2 hydrogen sulfide + 2 5'-deoxyadenosine + 2 L-methionine + 2 reduced [2Fe-2S]-[ferredoxin]. It participates in protein modification; protein lipoylation via endogenous pathway; protein N(6)-(lipoyl)lysine from octanoyl-[acyl-carrier-protein]: step 2/2. Catalyzes the radical-mediated insertion of two sulfur atoms into the C-6 and C-8 positions of the octanoyl moiety bound to the lipoyl domains of lipoate-dependent enzymes, thereby converting the octanoylated domains into lipoylated derivatives. The protein is Lipoyl synthase of Corynebacterium aurimucosum (strain ATCC 700975 / DSM 44827 / CIP 107346 / CN-1) (Corynebacterium nigricans).